A 392-amino-acid chain; its full sequence is Branched-chain-amino-acid aminotransferase, mitochondrial (392 aa).

Residues 1-27 constitute a mitochondrion transit peptide; it reads MAAAALGQIWARKFLSVPWLLCGPRRY. Tyr-168 is a substrate binding site. Lys-229 bears the N6-(pyridoxal phosphate)lysine mark. Residue Lys-321 is modified to N6-acetyllysine.

Belongs to the class-IV pyridoxal-phosphate-dependent aminotransferase family. Homodimer. Requires pyridoxal 5'-phosphate as cofactor.

The protein resides in the mitochondrion. The enzyme catalyses L-leucine + 2-oxoglutarate = 4-methyl-2-oxopentanoate + L-glutamate. It carries out the reaction L-isoleucine + 2-oxoglutarate = (S)-3-methyl-2-oxopentanoate + L-glutamate. It catalyses the reaction L-valine + 2-oxoglutarate = 3-methyl-2-oxobutanoate + L-glutamate. Catalyzes the first reaction in the catabolism of the essential branched chain amino acids leucine, isoleucine, and valine. May also function as a transporter of branched chain alpha-keto acids. The chain is Branched-chain-amino-acid aminotransferase, mitochondrial (BCAT2) from Pongo abelii (Sumatran orangutan).